The primary structure comprises 186 residues: Mitoferrin-2A (186 aa).

Residues 75-163 form a Solcar repeat; the sequence is SNVTTHMLAG…FACYEKLKKT (89 aa). Transmembrane regions (helical) follow at residues 77 to 96, 137 to 157, and 172 to 185; these read VTTH…CLMY, RGLN…FACY, and GNSH…YSCP.

This sequence belongs to the mitochondrial carrier (TC 2.A.29) family.

The protein resides in the mitochondrion inner membrane. It carries out the reaction Fe(2+)(in) = Fe(2+)(out). In terms of biological role, mitochondrial iron transporter that mediates iron uptake. Probably required for heme synthesis of hemoproteins and Fe-S cluster assembly in non-erythroid cells. This is Mitoferrin-2A (slc25a28-a) from Xenopus laevis (African clawed frog).